Consider the following 169-residue polypeptide: uncharacterized protein (169 aa).

Residues 18–130 enclose the HD domain; that stretch reads VVEHCLAVSE…VAHADNLIFG (113 aa).

This is an uncharacterized protein from Methanocaldococcus jannaschii (strain ATCC 43067 / DSM 2661 / JAL-1 / JCM 10045 / NBRC 100440) (Methanococcus jannaschii).